Here is a 110-residue protein sequence, read N- to C-terminus: Phosphoribosyl-AMP cyclohydrolase (110 aa).

Aspartate 74 is a binding site for Mg(2+). Residue cysteine 75 participates in Zn(2+) binding. 2 residues coordinate Mg(2+): aspartate 76 and aspartate 78. Positions 91 and 98 each coordinate Zn(2+).

This sequence belongs to the PRA-CH family. As to quaternary structure, homodimer. Mg(2+) is required as a cofactor. The cofactor is Zn(2+).

It is found in the cytoplasm. It catalyses the reaction 1-(5-phospho-beta-D-ribosyl)-5'-AMP + H2O = 1-(5-phospho-beta-D-ribosyl)-5-[(5-phospho-beta-D-ribosylamino)methylideneamino]imidazole-4-carboxamide. It functions in the pathway amino-acid biosynthesis; L-histidine biosynthesis; L-histidine from 5-phospho-alpha-D-ribose 1-diphosphate: step 3/9. Catalyzes the hydrolysis of the adenine ring of phosphoribosyl-AMP. The protein is Phosphoribosyl-AMP cyclohydrolase of Lacticaseibacillus paracasei (strain ATCC 334 / BCRC 17002 / CCUG 31169 / CIP 107868 / KCTC 3260 / NRRL B-441) (Lactobacillus paracasei).